A 130-amino-acid polypeptide reads, in one-letter code: uncharacterized protein (130 aa).

A helical transmembrane segment spans residues 15–31; that stretch reads LYLCPAIIRLSSVCTLA.

The protein resides in the membrane. This is an uncharacterized protein from Saccharomyces cerevisiae (strain ATCC 204508 / S288c) (Baker's yeast).